Here is a 331-residue protein sequence, read N- to C-terminus: Phosphoribosylformylglycinamidine cyclo-ligase (331 aa).

The protein belongs to the AIR synthase family.

The protein localises to the cytoplasm. It carries out the reaction 2-formamido-N(1)-(5-O-phospho-beta-D-ribosyl)acetamidine + ATP = 5-amino-1-(5-phospho-beta-D-ribosyl)imidazole + ADP + phosphate + H(+). Its pathway is purine metabolism; IMP biosynthesis via de novo pathway; 5-amino-1-(5-phospho-D-ribosyl)imidazole from N(2)-formyl-N(1)-(5-phospho-D-ribosyl)glycinamide: step 2/2. The sequence is that of Phosphoribosylformylglycinamidine cyclo-ligase from Clostridium botulinum (strain Loch Maree / Type A3).